The sequence spans 462 residues: Sugar transporter ERD6-like 12 (462 aa).

Helical transmembrane passes span 25–45 (LLIF…AAIG), 62–82 (LAQF…GAIF), 101–121 (LFCI…WLDM), 124–144 (FLVG…IAEI), 151–171 (GAFT…VYYF), 179–199 (TLAI…FFIP), 262–282 (LTIG…GISS), 297–317 (IGMM…LILV), 326–346 (LMTS…AFGV), 358–378 (IFCF…MGAL), 399–419 (VTIA…FMLV), and 424–444 (GTFI…WCLV).

The protein belongs to the major facilitator superfamily. Sugar transporter (TC 2.A.1.1) family.

It localises to the membrane. Its function is as follows. Sugar transporter. The chain is Sugar transporter ERD6-like 12 (SUGTL5) from Arabidopsis thaliana (Mouse-ear cress).